Here is a 657-residue protein sequence, read N- to C-terminus: Regulator of MON1-CCZ1 complex (657 aa).

Residues 471 to 637 enclose the Mic1 domain; it reads KKEMPHKFVI…NFTPGEHCEE (167 aa).

It belongs to the RMC1 family. As to quaternary structure, found in a complex with RMC1, CCZ1 MON1A and MON1B.

Its subcellular location is the lysosome membrane. The protein resides in the late endosome membrane. In terms of biological role, component of the CCZ1-MON1 RAB7A guanine exchange factor (GEF). Acts as a positive regulator of CCZ1-MON1A/B function necessary for endosomal/autophagic flux and efficient RAB7A localization. This is Regulator of MON1-CCZ1 complex from Homo sapiens (Human).